A 366-amino-acid polypeptide reads, in one-letter code: CRS2-associated factor 2, mitochondrial (366 aa).

The N-terminal 14 residues, 1–14 (MLLPRDLLLLPWRR), are a transit peptide targeting the mitochondrion. The interval 24-82 (RRLNHHRAPPFSDPDDDPPFTRLAERPPRAPSKKKKKEEEDQGGRIRPPEPASSDLPFD) is disordered. Residues 60–71 (KEEEDQGGRIRP) show a composition bias toward basic and acidic residues. CRM domains lie at 143–241 (EPLA…QRPQ) and 263–359 (DGLT…SVSL).

In terms of assembly, part of large ribonucleo-protein complexes that include group IIB introns.

The protein resides in the mitochondrion. Its function is as follows. May be involved in the splicing of group IIB introns in mitochondria. The protein is CRS2-associated factor 2, mitochondrial of Oryza sativa subsp. japonica (Rice).